The sequence spans 226 residues: Large ribosomal subunit protein uL1 (226 aa).

It belongs to the universal ribosomal protein uL1 family. Part of the 50S ribosomal subunit.

Binds directly to 23S rRNA. The L1 stalk is quite mobile in the ribosome, and is involved in E site tRNA release. Its function is as follows. Protein L1 is also a translational repressor protein, it controls the translation of the L11 operon by binding to its mRNA. The chain is Large ribosomal subunit protein uL1 from Borreliella burgdorferi (strain ZS7) (Borrelia burgdorferi).